Here is a 160-residue protein sequence, read N- to C-terminus: Serine-protein kinase RsbW (160 aa).

The protein belongs to the anti-sigma-factor family.

The catalysed reaction is L-seryl-[protein] + ATP = O-phospho-L-seryl-[protein] + ADP + H(+). The enzyme catalyses L-threonyl-[protein] + ATP = O-phospho-L-threonyl-[protein] + ADP + H(+). In terms of biological role, negative regulator of sigma-B activity. Phosphorylates and inactivates its specific antagonist protein, RsbV. Upon phosphorylation of RsbV, RsbW is released and binds to sigma-B, thereby blocking its ability to form an RNA polymerase holoenzyme (E-sigma-B). This chain is Serine-protein kinase RsbW, found in Bacillus thuringiensis (strain Al Hakam).